A 1217-amino-acid chain; its full sequence is CST complex subunit CTC1 (1217 aa).

The tract at residues 328–347 (EADPKPLPMPSNSEDKKDPE) is disordered.

The protein belongs to the CTC1 family. As to quaternary structure, component of the CST complex, composed of TEN1/C17orf106, CTC1/C17orf68 and STN1; in the complex interacts directly with STN1. Interacts with ACD and POT1.

It is found in the nucleus. Its subcellular location is the chromosome. The protein localises to the telomere. In terms of biological role, component of the CST complex proposed to act as a specialized replication factor promoting DNA replication under conditions of replication stress or natural replication barriers such as the telomere duplex. The CST complex binds single-stranded DNA with high affinity in a sequence-independent manner, while isolated subunits bind DNA with low affinity by themselves. Initially the CST complex has been proposed to protect telomeres from DNA degradation. However, the CST complex has been shown to be involved in several aspects of telomere replication. The CST complex inhibits telomerase and is involved in telomere length homeostasis; it is proposed to bind to newly telomerase-synthesized 3' overhangs and to terminate telomerase action implicating the association with the ACD:POT1 complex thus interfering with its telomerase stimulation activity. The CST complex is also proposed to be involved in fill-in synthesis of the telomeric C-strand probably implicating recruitment and activation of DNA polymerase alpha. The CST complex facilitates recovery from many forms of exogenous DNA damage; seems to be involved in the re-initiation of DNA replication at repaired forks and/or dormant origins. Involved in telomere maintenance. Involved in genome stability. May be in involved in telomeric C-strand fill-in during late S/G2 phase. This is CST complex subunit CTC1 (CTC1) from Homo sapiens (Human).